A 134-amino-acid polypeptide reads, in one-letter code: Profilin-2 (134 aa).

Cysteines 13 and 118 form a disulfide. Residues 84–100 (AVIRGKKGSGGITIKKT) carry the Involved in PIP2 interaction motif. The residue at position 114 (T114) is a Phosphothreonine.

It belongs to the profilin family. In terms of assembly, occurs in many kinds of cells as a complex with monomeric actin in a 1:1 ratio. Post-translationally, phosphorylated by MAP kinases.

It is found in the cytoplasm. The protein localises to the cytoskeleton. In terms of biological role, binds to actin and affects the structure of the cytoskeleton. At high concentrations, profilin prevents the polymerization of actin, whereas it enhances it at low concentrations. This chain is Profilin-2, found in Olea europaea (Common olive).